The chain runs to 272 residues: Ribosomal RNA small subunit methyltransferase A (272 aa).

Residues H13, L15, G40, E61, D85, and N105 each coordinate S-adenosyl-L-methionine.

This sequence belongs to the class I-like SAM-binding methyltransferase superfamily. rRNA adenine N(6)-methyltransferase family. RsmA subfamily.

The protein localises to the cytoplasm. It catalyses the reaction adenosine(1518)/adenosine(1519) in 16S rRNA + 4 S-adenosyl-L-methionine = N(6)-dimethyladenosine(1518)/N(6)-dimethyladenosine(1519) in 16S rRNA + 4 S-adenosyl-L-homocysteine + 4 H(+). In terms of biological role, specifically dimethylates two adjacent adenosines (A1518 and A1519) in the loop of a conserved hairpin near the 3'-end of 16S rRNA in the 30S particle. May play a critical role in biogenesis of 30S subunits. In Bacteroides fragilis (strain ATCC 25285 / DSM 2151 / CCUG 4856 / JCM 11019 / LMG 10263 / NCTC 9343 / Onslow / VPI 2553 / EN-2), this protein is Ribosomal RNA small subunit methyltransferase A.